The chain runs to 7481 residues: Polyketide synthase GfsA (7481 aa).

Positions 24–1020 are loading module (LM); that stretch reads ASDEPIAVIG…ETAEFVRARL (997 aa). The 426-residue stretch at 26 to 451 folds into the Ketosynthase family 3 (KS3) 1 domain; it reads DEPIAVIGLS…GTNCHVVVSA (426 aa). The tract at residues 60–80 is disordered; sequence RVPADRETPPSTEEESADGEA. Catalysis depends on glutamine 197, which acts as the For decarboxylation activity of LM. Serine 662 acts as the For acyltransferase activity of LM in catalysis. Positions 945-1020 constitute a Carrier 1 domain; the sequence is PDPVETVRQL…ETAEFVRARL (76 aa). Position 980 is an O-(pantetheine 4'-phosphoryl)serine (serine 980). The 417-residue stretch at 1038–1454 folds into the Ketosynthase family 3 (KS3) 2 domain; the sequence is DEPIAVVAMS…GTNAHVILEQ (417 aa). 4 module regions span residues 1038–2517, 2538–4063, 4084–5636, and 5655–7400; these read DEPI…AGEL, EDPI…LQRI, DDPI…GSEV, and DEPV…GEQL. Active-site for beta-ketoacyl synthase 1 activity residues include cysteine 1201, histidine 1336, and histidine 1376. Residues 2442–2517 form the Carrier 2 domain; sequence RVLLDLVRGR…ALAEHLAGEL (76 aa). Serine 2477 carries the O-(pantetheine 4'-phosphoryl)serine modification. One can recognise a Ketosynthase family 3 (KS3) 3 domain in the interval 2538 to 2964; that stretch reads EDPIAIVAMS…GTNAHVIIEE (427 aa). Residues cysteine 2711, histidine 2846, and histidine 2886 each act as for beta-ketoacyl synthase 2 activity in the active site. Residues 3988–4063 enclose the Carrier 3 domain; that stretch reads QALQDLVLTE…ATTEYLLQRI (76 aa). Residue serine 4023 is modified to O-(pantetheine 4'-phosphoryl)serine. The region spanning 4084–4514 is the Ketosynthase family 3 (KS3) 4 domain; it reads DDPIAIVAMG…GTNAHVILEQ (431 aa). Catalysis depends on for beta-ketoacyl synthase 3 activity residues cysteine 4261, histidine 4396, and histidine 4436. The 76-residue stretch at 5561–5636 folds into the Carrier 4 domain; it reads TALLDLIRGQ…ALAEYVGSEV (76 aa). At serine 5596 the chain carries O-(pantetheine 4'-phosphoryl)serine. The Ketosynthase family 3 (KS3) 5 domain occupies 5655-6081; it reads DEPVAIIGMS…GTNAHVILEQ (427 aa). Active-site for beta-ketoacyl synthase 4 activity residues include cysteine 5828, histidine 5963, and histidine 6003. The interval 6561–6685 is N-terminal hotdog fold; the sequence is HPLLGAAVAL…GVLASGAATV (125 aa). Residues 6561 to 6841 form the PKS/mFAS DH domain; sequence HPLLGAAVAL…LRPVSADTIA (281 aa). The active-site Proton acceptor; for dehydratase activity is histidine 6593. The interval 6700–6841 is C-terminal hotdog fold; that stretch reads ATAVDIDGLY…LRPVSADTIA (142 aa). The active-site Proton donor; for dehydratase activity is the aspartate 6761. The Carrier 5 domain occupies 7325–7400; that stretch reads QELLDFVCEH…LLAGHIGEQL (76 aa). The residue at position 7360 (serine 7360) is an O-(pantetheine 4'-phosphoryl)serine.

As to quaternary structure, homodimer. The loading module (LM, residues 13-926) dimerizes. LM cross-links to its cognate acyl-carrier domain in a manner that seems physiological; mutation of residues in the 2 domains alters reactions efficiency in a manner predicted by the cross-linked crystal. It depends on pantetheine 4'-phosphate as a cofactor.

Its pathway is antibiotic biosynthesis. First protein in the synthesis of the 16-membered macrolide antibiotics FD-891 and FD-892. Composed of 5 modules; the first is a loading module (LM) that synthesizes a starter unit used by the first elongation module for polyketide chain elongation. The starter unit is extended by multiple rounds of addition of malonyl-CoA or methylmalonyl-CoA, and other modifications to help generate the final products. The loading module (residues 1-927, LM with an inactive acyltransferase domain) preferentially decarboxylates malonyl-GfsA acyl carrier protein of the LM (ACP-LM) over methylmalonyl-GfsA ACP-LM and has no activity on malonyl-CoA or methymalonyl-CoA. LM decarboxylates malonyl-ACP-LM better than the malonyl-ACP-1 module of GfsA (i.e. the next module in the same protein) and has no activity on other malonyl-ACP modules. The chain is Polyketide synthase GfsA from Streptomyces halstedii.